The primary structure comprises 561 residues: MSEEDIRAARLEKVEQLKQLGTNPYAYRWESTHHAAQLQEQFADLASGEEVDLEVAIAGRIMARRVFGKLAFFTLQDETGTIQLYLDKNRIQESMADIDADAFNHLKQLTDAGDILGVKGTIKRTEKGELSVYVKQYTILTKSLLPLPDKWHGLTDVAKRYRQRYVDLIVNPEVRQTFRRRAQITAGIRRYLEQRDFLEIETPVLQSEAGGADARPFITHHNTLEMELYLRIATELHLKRLIVGGFEKVFELGRIFRNEGISTRHNPEFTTIEVYQAYADYNDMMALTEGIITTVAQEVLGTLQITYQGEPIDLTPPWRRVTMHDLVKEFTGLDFNSFQTLEEAKTASKNAGIPGVDEAKSIGKLLNLAFEEKVEANLIQPTFVIDYPVEISPLAKPHRSQPGLVERFELFIVGRETGNSFSELTDPIDQRERLEAQAERKAAGDLEAQGVDEDFLTALEYGMPPTGGLGIGIDRLVMLLTDSASIRDVIAFPLLKPEGSVIKQFSYEQKTQTLTIEFDSGSVYEYFKVPPSVKEDLDNAPSKGQHFNKFIKGKFKFEQLS.

Mg(2+) contacts are provided by E409 and E416.

The protein belongs to the class-II aminoacyl-tRNA synthetase family. Homodimer. Mg(2+) serves as cofactor.

The protein resides in the cytoplasm. The enzyme catalyses tRNA(Lys) + L-lysine + ATP = L-lysyl-tRNA(Lys) + AMP + diphosphate. The protein is Lysine--tRNA ligase of Nostoc punctiforme (strain ATCC 29133 / PCC 73102).